The sequence spans 325 residues: Casein kinase I isoform alpha (325 aa).

Ala2 is subject to N-acetylalanine. Ser4 bears the Phosphoserine mark. Lys8 carries the N6-acetyllysine modification. The 269-residue stretch at Tyr17–Phe285 folds into the Protein kinase domain. ATP contacts are provided by residues Ile23–Ile31 and Lys46. The active-site Proton acceptor is Asp136.

It belongs to the protein kinase superfamily. CK1 Ser/Thr protein kinase family. Casein kinase I subfamily. In terms of assembly, interacts with the Axin complex. Interacts with TUT1, leading to TUT1 phosphorylation. Interacts with FAM83A, FAM83B, FAM83C, FAM83D, FAM83E, FAM83F, FAM83G and FAM83H (via DUF1669). Interaction with FAM83H recruits CSNK1A1 to keratin filaments. Phosphorylated by MTOR in response to mitogenic stimulation, leading to its activation.

The protein resides in the cytoplasm. The protein localises to the cytoskeleton. Its subcellular location is the microtubule organizing center. It localises to the centrosome. It is found in the chromosome. The protein resides in the centromere. The protein localises to the kinetochore. Its subcellular location is the nucleus speckle. It localises to the cilium basal body. It is found in the spindle. The catalysed reaction is L-seryl-[protein] + ATP = O-phospho-L-seryl-[protein] + ADP + H(+). It carries out the reaction L-threonyl-[protein] + ATP = O-phospho-L-threonyl-[protein] + ADP + H(+). Functionally, casein kinases are operationally defined by their preferential utilization of acidic proteins such as caseins as substrates. Can phosphorylate a large number of proteins. Participates in Wnt signaling. Phosphorylates CTNNB1 at 'Ser-45'. May phosphorylate PER1 and PER2. May play a role in segregating chromosomes during mitosis. May play a role in keratin cytoskeleton disassembly and thereby, it may regulate epithelial cell migration. Acts as a positive regulator of mTORC1 and mTORC2 signaling in response to nutrients by mediating phosphorylation of DEPTOR inhibitor. Acts as an inhibitor of NLRP3 inflammasome assembly by mediating phosphorylation of NLRP3. In Oryctolagus cuniculus (Rabbit), this protein is Casein kinase I isoform alpha (CSNK1A1).